The sequence spans 176 residues: 2-C-methyl-D-erythritol 2,4-cyclodiphosphate synthase (176 aa).

A divalent metal cation-binding residues include Asp-23, His-25, and His-60. 23 to 25 (DSH) is a binding site for 4-CDP-2-C-methyl-D-erythritol 2-phosphate. 149-152 (TSGE) lines the 4-CDP-2-C-methyl-D-erythritol 2-phosphate pocket.

The protein belongs to the IspF family. Homotrimer. It depends on a divalent metal cation as a cofactor.

It catalyses the reaction 4-CDP-2-C-methyl-D-erythritol 2-phosphate = 2-C-methyl-D-erythritol 2,4-cyclic diphosphate + CMP. Its pathway is isoprenoid biosynthesis; isopentenyl diphosphate biosynthesis via DXP pathway; isopentenyl diphosphate from 1-deoxy-D-xylulose 5-phosphate: step 4/6. Its function is as follows. Involved in the biosynthesis of isopentenyl diphosphate (IPP) and dimethylallyl diphosphate (DMAPP), two major building blocks of isoprenoid compounds. Catalyzes the conversion of 4-diphosphocytidyl-2-C-methyl-D-erythritol 2-phosphate (CDP-ME2P) to 2-C-methyl-D-erythritol 2,4-cyclodiphosphate (ME-CPP) with a corresponding release of cytidine 5-monophosphate (CMP). The chain is 2-C-methyl-D-erythritol 2,4-cyclodiphosphate synthase from Chlamydia abortus (strain DSM 27085 / S26/3) (Chlamydophila abortus).